We begin with the raw amino-acid sequence, 354 residues long: Guanine nucleotide-binding protein G(t) subunit alpha-2 (354 aa).

The disordered stretch occupies residues 1–28 (MGSGISAEDKELARRSKELEKKLQEDAD). Glycine 2 is lipidated: N-myristoyl glycine. Residues 7-28 (AEDKELARRSKELEKKLQEDAD) are compositionally biased toward basic and acidic residues. The 323-residue stretch at 32 to 354 (KTVKLLLLGA…KENLKDCGLF (323 aa)) folds into the G-alpha domain. The tract at residues 35 to 48 (KLLLLGAGESGKST) is G1 motif. Residues 40 to 47 (GAGESGKS), 175 to 181 (LRSRVKT), 200 to 204 (DVGGQ), 269 to 272 (NKKD), and alanine 326 contribute to the GTP site. 2 residues coordinate Mg(2+): serine 47 and threonine 181. The G2 motif stretch occupies residues 173–181 (DVLRSRVKT). Positions 196 to 205 (FRMFDVGGQR) are G3 motif. Positions 265–272 (VLFLNKKD) are G4 motif. The tract at residues 324 to 329 (TCATDT) is G5 motif.

It belongs to the G-alpha family. G(i/o/t/z) subfamily. In terms of assembly, g proteins are composed of 3 units; alpha, beta and gamma. The alpha chain contains the guanine nucleotide binding site. In the retina, expressed in the rod photoreceptors.

The protein localises to the cell projection. It is found in the cilium. Its subcellular location is the photoreceptor outer segment. The protein resides in the photoreceptor inner segment. Functionally, guanine nucleotide-binding proteins (G proteins) are involved as modulators or transducers in various transmembrane signaling systems. Transducin is an amplifier and one of the transducers of a visual impulse that performs the coupling between rhodopsin and cGMP-phosphodiesterase. The sequence is that of Guanine nucleotide-binding protein G(t) subunit alpha-2 (Gnat2) from Mus musculus (Mouse).